Reading from the N-terminus, the 282-residue chain is Elongation factor Ts (282 aa).

Residues 80 to 83 are involved in Mg(2+) ion dislocation from EF-Tu; it reads TDFV.

This sequence belongs to the EF-Ts family.

Its subcellular location is the cytoplasm. Associates with the EF-Tu.GDP complex and induces the exchange of GDP to GTP. It remains bound to the aminoacyl-tRNA.EF-Tu.GTP complex up to the GTP hydrolysis stage on the ribosome. The polypeptide is Elongation factor Ts (Chlamydia felis (strain Fe/C-56) (Chlamydophila felis)).